We begin with the raw amino-acid sequence, 432 residues long: Glutamyl-tRNA reductase (432 aa).

Residues 49 to 52, S107, 112 to 114, and Q118 each bind substrate; these read TCNR and ETQ. C50 acts as the Nucleophile in catalysis. 186–191 is an NADP(+) binding site; it reads GAGEMG.

The protein belongs to the glutamyl-tRNA reductase family. In terms of assembly, homodimer.

It carries out the reaction (S)-4-amino-5-oxopentanoate + tRNA(Glu) + NADP(+) = L-glutamyl-tRNA(Glu) + NADPH + H(+). The protein operates within porphyrin-containing compound metabolism; protoporphyrin-IX biosynthesis; 5-aminolevulinate from L-glutamyl-tRNA(Glu): step 1/2. In terms of biological role, catalyzes the NADPH-dependent reduction of glutamyl-tRNA(Glu) to glutamate 1-semialdehyde (GSA). This is Glutamyl-tRNA reductase from Campylobacter jejuni subsp. jejuni serotype O:6 (strain 81116 / NCTC 11828).